The sequence spans 145 residues: UPF0201 protein STK_09490 (145 aa).

It belongs to the UPF0201 family.

The chain is UPF0201 protein STK_09490 from Sulfurisphaera tokodaii (strain DSM 16993 / JCM 10545 / NBRC 100140 / 7) (Sulfolobus tokodaii).